An 83-amino-acid polypeptide reads, in one-letter code: Cytochrome b559 subunit alpha (83 aa).

Residues 21–35 form a helical membrane-spanning segment; sequence VIHSITIPSLFIAGW. Position 23 (histidine 23) interacts with heme.

It belongs to the PsbE/PsbF family. In terms of assembly, heterodimer of an alpha subunit and a beta subunit. PSII is composed of 1 copy each of membrane proteins PsbA, PsbB, PsbC, PsbD, PsbE, PsbF, PsbH, PsbI, PsbJ, PsbK, PsbL, PsbM, PsbT, PsbX, PsbY, PsbZ, Psb30/Ycf12, at least 3 peripheral proteins of the oxygen-evolving complex and a large number of cofactors. It forms dimeric complexes. Heme b is required as a cofactor.

The protein resides in the plastid. It is found in the chloroplast thylakoid membrane. Functionally, this b-type cytochrome is tightly associated with the reaction center of photosystem II (PSII). PSII is a light-driven water:plastoquinone oxidoreductase that uses light energy to abstract electrons from H(2)O, generating O(2) and a proton gradient subsequently used for ATP formation. It consists of a core antenna complex that captures photons, and an electron transfer chain that converts photonic excitation into a charge separation. In Citrus sinensis (Sweet orange), this protein is Cytochrome b559 subunit alpha.